A 425-amino-acid chain; its full sequence is Enolase (425 aa).

Glutamine 163 lines the (2R)-2-phosphoglycerate pocket. Glutamate 205 functions as the Proton donor in the catalytic mechanism. Mg(2+) contacts are provided by aspartate 242, glutamate 285, and aspartate 312. Lysine 337, arginine 366, serine 367, and lysine 388 together coordinate (2R)-2-phosphoglycerate. Lysine 337 acts as the Proton acceptor in catalysis.

The protein belongs to the enolase family. Requires Mg(2+) as cofactor.

It is found in the cytoplasm. The protein localises to the secreted. The protein resides in the cell surface. It catalyses the reaction (2R)-2-phosphoglycerate = phosphoenolpyruvate + H2O. It participates in carbohydrate degradation; glycolysis; pyruvate from D-glyceraldehyde 3-phosphate: step 4/5. Catalyzes the reversible conversion of 2-phosphoglycerate (2-PG) into phosphoenolpyruvate (PEP). It is essential for the degradation of carbohydrates via glycolysis. This is Enolase from Ruegeria sp. (strain TM1040) (Silicibacter sp.).